We begin with the raw amino-acid sequence, 438 residues long: Methionine aminopeptidase 2 (438 aa).

The disordered stretch occupies residues 1–89; it reads MAAQAAPAEE…LFPNKQYPKG (89 aa). The segment covering 10-20 has biased composition (basic and acidic residues); sequence ELSKLSVEETK. Basic residues predominate over residues 51–65; it reads AKKKKKRKPRKKKKA. H191 contacts substrate. Residues D211, D222, and H291 each contribute to the a divalent metal cation site. H299 contacts substrate. A divalent metal cation is bound by residues E324 and E419.

The protein belongs to the peptidase M24A family. Methionine aminopeptidase eukaryotic type 2 subfamily. It depends on Co(2+) as a cofactor. Zn(2+) is required as a cofactor. Requires Mn(2+) as cofactor. The cofactor is Fe(2+).

It is found in the cytoplasm. It carries out the reaction Release of N-terminal amino acids, preferentially methionine, from peptides and arylamides.. Cotranslationally removes the N-terminal methionine from nascent proteins. The N-terminal methionine is often cleaved when the second residue in the primary sequence is small and uncharged (Met-Ala-, Cys, Gly, Pro, Ser, Thr, or Val). This chain is Methionine aminopeptidase 2, found in Sordaria macrospora (strain ATCC MYA-333 / DSM 997 / K(L3346) / K-hell).